The following is a 1752-amino-acid chain: Serine protease/ABC transporter B family protein tagA (1752 aa).

A signal peptide spans 1-24 (MNKKLFIFGLSLFLFLFIFNLSLS). The N-linked (GlcNAc...) asparagine glycan is linked to Asn-20. The Peptidase S8 domain maps to 280-696 (HYSIQSGSAS…FGNIQLSKLI (417 aa)). Active-site charge relay system residues include Asp-312 and His-352. Residues Asn-400 and Asn-557 are each glycosylated (N-linked (GlcNAc...) asparagine). Ser-625 serves as the catalytic Charge relay system. Residues Asn-653, Asn-785, and Asn-823 are each glycosylated (N-linked (GlcNAc...) asparagine). Residues 909 to 929 (IVLLGIFGIIIVGAVIFVLVC) traverse the membrane as a helical segment. The disordered stretch occupies residues 946-1032 (DKGGDGNSIR…QNNSPQYDED (87 aa)). The segment covering 962 to 994 (NNNNNNNNNNNNNNNNNNNNNNNNNNNNNNNNN) has biased composition (low complexity). An N-linked (GlcNAc...) asparagine glycan is attached at Asn-993. A compositionally biased stretch (polar residues) spans 995 to 1004 (SNGKQSNIEL). The span at 1013–1028 (GTPNGDDQQQQNNSPQ) shows a compositional bias: low complexity. The next 6 helical transmembrane spans lie at 1058-1078 (ILGL…AVPL), 1102-1122 (FALI…LLAL), 1174-1194 (IPHM…LFII), 1200-1220 (LVVL…GGYI), 1285-1305 (TSGI…SSLV), and 1315-1335 (LIAF…VASL). The region spanning 1059–1341 (LGLALFLSFI…VASLYTTYKS (283 aa)) is the ABC transmembrane type-1 domain. The region spanning 1374 to 1610 (IQFNKVSFAY…KGMFYDFVQI (237 aa)) is the ABC transporter domain. 1409-1416 (GPSGGGKS) lines the ATP pocket. Residues 1621-1686 (IQLPSNSRNT…SRSPPPMWRQ (66 aa)) are disordered. Residues 1631–1642 (RNADKLRNRSET) show a composition bias toward basic and acidic residues. Asn-1638, Asn-1670, and Asn-1694 each carry an N-linked (GlcNAc...) asparagine glycan.

The protein in the C-terminal section; belongs to the ABC transporter superfamily. ABCB family. Multidrug resistance exporter (TC 3.A.1.201) subfamily. This sequence in the N-terminal section; belongs to the peptidase S8 family.

Its subcellular location is the membrane. Required for a general cell fate determination at the onset of development. Required for the specification of an initial population of prespore cells in which tagA is expressed. Required for normal SDF-2 signaling during spore encapsulation. This is Serine protease/ABC transporter B family protein tagA (tagA) from Dictyostelium discoideum (Social amoeba).